The following is a 235-amino-acid chain: MSAPWAEWDHIVKIDPDKTLADGETFQDVCATGTDALEIGGTTGMTEEKMARVVEATAAHDIPVYIEPSNVGAVVHDEDLDGYFVPTVLNAGDVFWTTGAHKEWVRLDGDIDWDRTFTEAYIVLNPDASVADYTEADCNLDIDEVAAYAEVAEKMFGQEIVYVEYSGMLGDPEMVQAATDATEEATVFYGGGIRDYESAYTMRQHADTVIVGDLVHDEGADAVRETVDGAKDAAD.

Lysine 13 serves as a coordination point for sn-glycerol 1-phosphate. Aspartate 15 and threonine 42 together coordinate Mg(2+). Sn-glycerol 1-phosphate-binding positions include 162–167 (YVEYSG), glycine 192, and 212–213 (GD).

It belongs to the GGGP/HepGP synthase family. Group I subfamily. Mg(2+) is required as a cofactor.

It is found in the cytoplasm. The catalysed reaction is sn-glycerol 1-phosphate + (2E,6E,10E)-geranylgeranyl diphosphate = sn-3-O-(geranylgeranyl)glycerol 1-phosphate + diphosphate. Its pathway is membrane lipid metabolism; glycerophospholipid metabolism. Its function is as follows. Prenyltransferase that catalyzes the transfer of the geranylgeranyl moiety of geranylgeranyl diphosphate (GGPP) to the C3 hydroxyl of sn-glycerol-1-phosphate (G1P). This reaction is the first ether-bond-formation step in the biosynthesis of archaeal membrane lipids. This Natronomonas pharaonis (strain ATCC 35678 / DSM 2160 / CIP 103997 / JCM 8858 / NBRC 14720 / NCIMB 2260 / Gabara) (Halobacterium pharaonis) protein is Geranylgeranylglyceryl phosphate synthase.